Consider the following 122-residue polypeptide: Large ribosomal subunit protein bL12 (122 aa).

This sequence belongs to the bacterial ribosomal protein bL12 family. Homodimer. Part of the ribosomal stalk of the 50S ribosomal subunit. Forms a multimeric L10(L12)X complex, where L10 forms an elongated spine to which 2 to 4 L12 dimers bind in a sequential fashion. Binds GTP-bound translation factors.

In terms of biological role, forms part of the ribosomal stalk which helps the ribosome interact with GTP-bound translation factors. Is thus essential for accurate translation. In Shewanella woodyi (strain ATCC 51908 / MS32), this protein is Large ribosomal subunit protein bL12.